The following is a 389-amino-acid chain: Chalcone synthase 6 (389 aa).

Cysteine 164 is a catalytic residue.

This sequence belongs to the thiolase-like superfamily. Chalcone/stilbene synthases family.

It catalyses the reaction (E)-4-coumaroyl-CoA + 3 malonyl-CoA + 3 H(+) = 2',4,4',6'-tetrahydroxychalcone + 3 CO2 + 4 CoA. The protein operates within secondary metabolite biosynthesis; flavonoid biosynthesis. In terms of biological role, the primary product of this enzyme is 4,2',4',6'-tetrahydroxychalcone (also termed naringenin-chalcone or chalcone) which can under specific conditions spontaneously isomerize into naringenin. This chain is Chalcone synthase 6 (CHS6), found in Pisum sativum (Garden pea).